The following is a 104-amino-acid chain: Pterin-4-alpha-carbinolamine dehydratase (104 aa).

Ala-2 is modified (N-acetylalanine). Substrate is bound by residues 61–63 (DHH) and 78–81 (STHD).

The protein belongs to the pterin-4-alpha-carbinolamine dehydratase family. Homotetramer and homodimer.

Its subcellular location is the cytoplasm. The protein resides in the nucleus. The catalysed reaction is (4aS,6R)-4a-hydroxy-L-erythro-5,6,7,8-tetrahydrobiopterin = (6R)-L-erythro-6,7-dihydrobiopterin + H2O. Involved in tetrahydrobiopterin biosynthesis. Seems to both prevent the formation of 7-pterins and accelerate the formation of quinonoid-BH2. Coactivator for HNF1A-dependent transcription. Regulates the dimerization of homeodomain protein HNF1A and enhances its transcriptional activity. Also acts as a coactivator for HNF1B-dependent transcription. The sequence is that of Pterin-4-alpha-carbinolamine dehydratase (pcbd) from Xenopus laevis (African clawed frog).